A 469-amino-acid chain; its full sequence is Sulfate adenylyltransferase subunit 1 (469 aa).

The tr-type G domain maps to Lys22–Arg238. The tract at residues Gly31–Ser38 is G1. Gly31–Ser38 provides a ligand contact to GTP. The segment at Gly89–Asp93 is G2. The interval Asp110–Gly113 is G3. Residues Asp110 to His114 and Asn165 to Asp168 each bind GTP. Residues Asn165–Asp168 are G4. The segment at Ser203–Leu205 is G5.

This sequence belongs to the TRAFAC class translation factor GTPase superfamily. Classic translation factor GTPase family. CysN/NodQ subfamily. As to quaternary structure, heterodimer composed of CysD, the smaller subunit, and CysN.

It carries out the reaction sulfate + ATP + H(+) = adenosine 5'-phosphosulfate + diphosphate. It functions in the pathway sulfur metabolism; hydrogen sulfide biosynthesis; sulfite from sulfate: step 1/3. With CysD forms the ATP sulfurylase (ATPS) that catalyzes the adenylation of sulfate producing adenosine 5'-phosphosulfate (APS) and diphosphate, the first enzymatic step in sulfur assimilation pathway. APS synthesis involves the formation of a high-energy phosphoric-sulfuric acid anhydride bond driven by GTP hydrolysis by CysN coupled to ATP hydrolysis by CysD. This is Sulfate adenylyltransferase subunit 1 from Aliarcobacter butzleri (strain RM4018) (Arcobacter butzleri).